A 235-amino-acid chain; its full sequence is Urease accessory protein UreF (235 aa).

This sequence belongs to the UreF family. As to quaternary structure, ureD, UreF and UreG form a complex that acts as a GTP-hydrolysis-dependent molecular chaperone, activating the urease apoprotein by helping to assemble the nickel containing metallocenter of UreC. The UreE protein probably delivers the nickel.

It is found in the cytoplasm. Its function is as follows. Required for maturation of urease via the functional incorporation of the urease nickel metallocenter. This chain is Urease accessory protein UreF, found in Haemophilus influenzae (strain ATCC 51907 / DSM 11121 / KW20 / Rd).